Reading from the N-terminus, the 165-residue chain is P2Y purinoceptor 4 (165 aa).

Residues 1-16 (SDTLYVLSLPTLVYYY) form a helical membrane-spanning segment. The Extracellular portion of the chain corresponds to 17 to 30 (AARNHWPFGTGFCK). Residues 31–51 (FVRFLFYWNLYCSVLFLTCIS) traverse the membrane as a helical segment. Residues 52–74 (VHRYMGICHPLRALRWGRPRFAS) lie on the Cytoplasmic side of the membrane. The helical transmembrane segment at 75–95 (LLCLAVWLVVAGCLVPNLFFV) threads the bilayer. The Extracellular segment spans residues 96–124 (TTSPNGTTILCHDTTRPEEFDHYVHFSSA). Asparagine 100 is a glycosylation site (N-linked (GlcNAc...) asparagine). A helical transmembrane segment spans residues 125 to 145 (VMVLLFGLPFLVTLVCYGLMA). The Cytoplasmic segment spans residues 146–165 (RRLYRPLPGAGQSSSRLRSL).

This sequence belongs to the G-protein coupled receptor 1 family.

The protein localises to the cell membrane. Receptor for UTP and UDP coupled to G-proteins that activate a phosphatidylinositol-calcium second messenger system. The protein is P2Y purinoceptor 4 (P2RY4) of Cricetulus griseus (Chinese hamster).